The chain runs to 479 residues: Putative F-box/LRR-repeat protein At1g56400 (479 aa).

In terms of domain architecture, F-box spans 12–60 (QDRLSNLPDVLLIMIISCLSFKECIRTSVLAKRWRYLCRETRNISFKET). 7 LRR repeats span residues 99 to 129 (YFSIPSDFLAAVESLIEFAVSRQVKNLVLDF), 139 to 167 (CASRYDYVCVQLPVCVYSLTTLESLKIYS), 186 to 211 (IGWIKLTDVESLLLNSPTLKSLSINY), 228 to 254 (VFESCDFSSFMVCCFDLPNVEIFKYSG), 287 to 312 (RTKLEGSVLSAFLNNLRGARTLSVCP), 342 to 367 (LHVMEFKGIKLLLDNCPNLETLTFDI), and 419 to 446 (LKFLIQSGRGRWPGREHGPMLERVELYM).

The chain is Putative F-box/LRR-repeat protein At1g56400 from Arabidopsis thaliana (Mouse-ear cress).